Reading from the N-terminus, the 162-residue chain is Regulator of ribonuclease activity A (162 aa).

The protein belongs to the RraA family. In terms of assembly, homotrimer. Binds to both RNA-binding sites in the C-terminal region of Rne and to RhlB.

It is found in the cytoplasm. Its function is as follows. Globally modulates RNA abundance by binding to RNase E (Rne) and regulating its endonucleolytic activity. Can modulate Rne action in a substrate-dependent manner by altering the composition of the degradosome. Modulates RNA-binding and helicase activities of the degradosome. This is Regulator of ribonuclease activity A from Haemophilus influenzae (strain ATCC 51907 / DSM 11121 / KW20 / Rd).